An 88-amino-acid chain; its full sequence is Large ribosomal subunit protein bL27 (88 aa).

The interval Met1–Arg20 is disordered.

The protein belongs to the bacterial ribosomal protein bL27 family.

This chain is Large ribosomal subunit protein bL27 (rpmA), found in Geobacillus stearothermophilus (Bacillus stearothermophilus).